A 385-amino-acid chain; its full sequence is ATP phosphoribosyltransferase regulatory subunit (385 aa).

This sequence belongs to the class-II aminoacyl-tRNA synthetase family. HisZ subfamily. In terms of assembly, heteromultimer composed of HisG and HisZ subunits.

Its subcellular location is the cytoplasm. It functions in the pathway amino-acid biosynthesis; L-histidine biosynthesis; L-histidine from 5-phospho-alpha-D-ribose 1-diphosphate: step 1/9. In terms of biological role, required for the first step of histidine biosynthesis. May allow the feedback regulation of ATP phosphoribosyltransferase activity by histidine. This chain is ATP phosphoribosyltransferase regulatory subunit, found in Laribacter hongkongensis (strain HLHK9).